A 61-amino-acid chain; its full sequence is Sperm protamine P1 (61 aa).

A disordered region spans residues 1–61 (MARYRHSRSR…RYSRRRRRRY (61 aa)).

The protein belongs to the protamine P1 family. Testis.

It localises to the nucleus. The protein resides in the chromosome. In terms of biological role, protamines substitute for histones in the chromatin of sperm during the haploid phase of spermatogenesis. They compact sperm DNA into a highly condensed, stable and inactive complex. This chain is Sperm protamine P1 (PRM1), found in Onychogalea fraenata (Bridled nail-tailed wallaby).